Reading from the N-terminus, the 550-residue chain is Glucose-6-phosphate isomerase 1 (550 aa).

The active-site Proton donor is the glutamate 355. Active-site residues include histidine 386 and lysine 512.

This sequence belongs to the GPI family.

It localises to the cytoplasm. It catalyses the reaction alpha-D-glucose 6-phosphate = beta-D-fructose 6-phosphate. The protein operates within carbohydrate biosynthesis; gluconeogenesis. It functions in the pathway carbohydrate degradation; glycolysis; D-glyceraldehyde 3-phosphate and glycerone phosphate from D-glucose: step 2/4. Catalyzes the reversible isomerization of glucose-6-phosphate to fructose-6-phosphate. The chain is Glucose-6-phosphate isomerase 1 from Rhodococcus jostii (strain RHA1).